Reading from the N-terminus, the 353-residue chain is MNECHYDKHMDFFYNRSNTDTVDDWTGTKLVIVLCVGTFFCLFIFFSNSLVIAAVIKNRKFHFPFYYLLANLAAADFFAGIAYVFLMFNTGPVSKTLTVNRWFLRQGLLDSSLTASLTNLLVIAVERHMSIMRMRVHSNLTKKRVTLLILLVWAIAIFMGAVPTLGWNCLCNISACSSLAPIYSRSYLVFWTVSNLMAFLIMVVVYLRIYVYVKRKTNVLSPHTSGSISRRRTPMKLMKTVMTVLGAFVVCWTPGLVVLLLDGLNCRQCGVQHVKRWFLLLALLNSVVNPIIYSYKDEDMYGTMKKMICCFSQENPERRPSRIPSTVLSRSDTGSQYIEDSISQGAVCNKSTS.

At 1–31 (MNECHYDKHMDFFYNRSNTDTVDDWTGTKLV) the chain is on the extracellular side. The N-linked (GlcNAc...) asparagine glycan is linked to Asn-15. The helical transmembrane segment at 32–52 (IVLCVGTFFCLFIFFSNSLVI) threads the bilayer. Residues 53 to 67 (AAVIKNRKFHFPFYY) lie on the Cytoplasmic side of the membrane. The chain crosses the membrane as a helical span at residues 68 to 88 (LLANLAAADFFAGIAYVFLMF). At 89–101 (NTGPVSKTLTVNR) the chain is on the extracellular side. Residues 102 to 124 (WFLRQGLLDSSLTASLTNLLVIA) traverse the membrane as a helical segment. The Cytoplasmic segment spans residues 125 to 146 (VERHMSIMRMRVHSNLTKKRVT). The chain crosses the membrane as a helical span at residues 147 to 167 (LLILLVWAIAIFMGAVPTLGW). The Extracellular segment spans residues 168-186 (NCLCNISACSSLAPIYSRS). A glycan (N-linked (GlcNAc...) asparagine) is linked at Asn-172. Residues 187–207 (YLVFWTVSNLMAFLIMVVVYL) traverse the membrane as a helical segment. Residues 208-240 (RIYVYVKRKTNVLSPHTSGSISRRRTPMKLMKT) lie on the Cytoplasmic side of the membrane. The chain crosses the membrane as a helical span at residues 241 to 261 (VMTVLGAFVVCWTPGLVVLLL). At 262–276 (DGLNCRQCGVQHVKR) the chain is on the extracellular side. Residues 277-297 (WFLLLALLNSVVNPIIYSYKD) form a helical membrane-spanning segment. At 298–353 (EDMYGTMKKMICCFSQENPERRPSRIPSTVLSRSDTGSQYIEDSISQGAVCNKSTS) the chain is on the cytoplasmic side. Cys-309 carries the S-palmitoyl cysteine lipid modification.

It belongs to the G-protein coupled receptor 1 family. In terms of tissue distribution, most abundantly expressed in prostate, testes, pancreas, and heart, with moderate levels in lung and ovary. No detectable expression in brain, placenta, liver, skeletal muscle, kidney, spleen, thymus, small intestine, colon, or peripheral blood leukocytes.

It localises to the cell membrane. Functionally, receptor for lysophosphatidic acid (LPA), a mediator of diverse cellular activities. May play a role in the development of ovarian cancer. Seems to be coupled to the G(i)/G(o) and G(q) families of heteromeric G proteins. In Homo sapiens (Human), this protein is Lysophosphatidic acid receptor 3 (LPAR3).